A 334-amino-acid chain; its full sequence is Stabilizer of axonemal microtubules 3 (334 aa).

Disordered stretches follow at residues 81 to 105 (AYVPKTHGGPCAQPRAPEPADPTRT), 128 to 153 (YQSSETRAQYTGSPSGDPRAPEYFGP), and 233 to 260 (QVWSHGPQRPPCPRSSRPPRPPRVRVPR). Residues 128 to 141 (YQSSETRAQYTGSP) show a composition bias toward polar residues. A compositionally biased stretch (pro residues) spans 240 to 251 (QRPPCPRSSRPP).

This chain is Stabilizer of axonemal microtubules 3, found in Homo sapiens (Human).